The sequence spans 396 residues: Elongation factor Tu (396 aa).

Positions 10-206 constitute a tr-type G domain; it reads KPHVNVGTIG…ALDSYIPDPE (197 aa). Residues 19-26 are G1; that stretch reads GHVDHGKT. 19 to 26 contacts GTP; sequence GHVDHGKT. Threonine 26 contacts Mg(2+). The interval 60–64 is G2; it reads GITIN. The tract at residues 81-84 is G3; that stretch reads DCPG. Residues 81-85 and 136-139 contribute to the GTP site; these read DCPGH and NKCD. The interval 136-139 is G4; sequence NKCD. A G5 region spans residues 174-176; that stretch reads SAL.

It belongs to the TRAFAC class translation factor GTPase superfamily. Classic translation factor GTPase family. EF-Tu/EF-1A subfamily. In terms of assembly, monomer.

It is found in the cytoplasm. The enzyme catalyses GTP + H2O = GDP + phosphate + H(+). GTP hydrolase that promotes the GTP-dependent binding of aminoacyl-tRNA to the A-site of ribosomes during protein biosynthesis. The protein is Elongation factor Tu of Dechloromonas aromatica (strain RCB).